The chain runs to 92 residues: Large ribosomal subunit protein uL23c (92 aa).

Belongs to the universal ribosomal protein uL23 family. In terms of assembly, part of the 50S ribosomal subunit.

It is found in the plastid. Its subcellular location is the chloroplast. Its function is as follows. Binds to 23S rRNA. This is Large ribosomal subunit protein uL23c (rpl23) from Chara vulgaris (Common stonewort).